The chain runs to 86 residues: Large ribosomal subunit protein eL20 (86 aa).

This sequence belongs to the eukaryotic ribosomal protein eL20 family. In terms of assembly, part of the 50S ribosomal subunit. Binds 23S rRNA.

The chain is Large ribosomal subunit protein eL20 from Metallosphaera sedula (strain ATCC 51363 / DSM 5348 / JCM 9185 / NBRC 15509 / TH2).